The sequence spans 257 residues: Ig delta chain C region secreted form (257 aa).

Residues 5–105 form the Ig-like 1 domain; sequence PDMFLLSECK…WDSQSSKRVT (101 aa). Cysteines 26 and 78 form a disulfide. N-linked (GlcNAc...) asparagine glycosylation is found at N58 and N75. A disordered region spans residues 89 to 111; the sequence is PFKFPESWDSQSSKRVTPTLQAK. The span at 96 to 111 shows a compositional bias: polar residues; sequence WDSQSSKRVTPTLQAK. N-linked (GlcNAc...) asparagine glycosylation is found at N112, N135, and N227. In terms of domain architecture, Ig-like 2 spans 133–233; it reads PSNLTVNILT…TKLNASKSLA (101 aa).

Cell lines producing IgD contain several mRNA species for Ig delta chains. In plasmacytomas, the secreted form is the major component, and the membrane-bound form is a minor component. In spleen, however, the membrane-bound form is the major component. These two forms differ in their C-terminal segments.

The protein localises to the secreted. The chain is Ig delta chain C region secreted form from Mus musculus (Mouse).